The chain runs to 389 residues: MVSVSEIRQAQRAEGPATIMAIGTANPSNCVEQSTYPDFYFKITNSEHKVELKEKFQRMCDKSMIKRRYMYLTEEILKENPSVCEYMAPSLDARQDMVVVEVPRLGKEAAVKAIKEWGQPKSKITHLIFCTTSGVDMPGADYQLTKLLGLRPYVKRYMMYQQGCFAGGTVLRLAKDLAENNKGARVLVVCSEVTAVTFRGPSDTHLDSLVGQALFGDGAAALIVGSDPIPEIEKPIFEMVWTAQTIAPDSEGAIDGHLVEAGLTFHLLKDVPGIVSKNIDKALIEAFQPLNISDYNSIFWIAHPGGPAILDQVEEKLGLKPEKMKATREVLSEYGNMSSACVLFILDEMRKKSAQAGLKTTGEGLDWGVLFGFGPGLTIETVVLHSVAI.

Residue cysteine 164 is part of the active site.

This sequence belongs to the thiolase-like superfamily. Chalcone/stilbene synthases family.

It catalyses the reaction (E)-4-coumaroyl-CoA + 3 malonyl-CoA + 3 H(+) = 2',4,4',6'-tetrahydroxychalcone + 3 CO2 + 4 CoA. It participates in secondary metabolite biosynthesis; flavonoid biosynthesis. In terms of biological role, the primary product of this enzyme is 4,2',4',6'-tetrahydroxychalcone (also termed naringenin-chalcone or chalcone) which can under specific conditions spontaneously isomerize into naringenin. The chain is Chalcone synthase 4-1 (CHS4-1) from Medicago sativa (Alfalfa).